The primary structure comprises 314 residues: Trimethylamine N-oxide-binding protein (314 aa).

Positions methionine 1–alanine 24 are cleaved as a signal peptide. Residues tryptophan 38, tryptophan 85, glutamate 114, tryptophan 164, and tryptophan 212 each coordinate trimethylamine N-oxide.

As to quaternary structure, the complex is probably composed of two ATP-binding proteins (TmoW), two transmembrane proteins (TmoV) and a solute-binding protein (TmoX).

It localises to the periplasm. In terms of biological role, part of the ABC transporter complex TmoXWV involved in trimethylamine N-oxide (TMAO) import. Possesses a high binding affinity toward TMAO, but presents little binding affinity toward betaine, carnitine, trimethylamine (TMA) or dimethylamine (DMA). This is Trimethylamine N-oxide-binding protein from Pelagibacter ubique (strain HTCC1062).